We begin with the raw amino-acid sequence, 433 residues long: NADH-quinone oxidoreductase subunit D (433 aa).

This sequence belongs to the complex I 49 kDa subunit family. As to quaternary structure, NDH-1 is composed of 14 different subunits. Subunits NuoB, C, D, E, F, and G constitute the peripheral sector of the complex.

The protein localises to the cell membrane. The enzyme catalyses a quinone + NADH + 5 H(+)(in) = a quinol + NAD(+) + 4 H(+)(out). Functionally, NDH-1 shuttles electrons from NADH, via FMN and iron-sulfur (Fe-S) centers, to quinones in the respiratory chain. The immediate electron acceptor for the enzyme in this species is believed to be a menaquinone. Couples the redox reaction to proton translocation (for every two electrons transferred, four hydrogen ions are translocated across the cytoplasmic membrane), and thus conserves the redox energy in a proton gradient. The protein is NADH-quinone oxidoreductase subunit D of Cutibacterium acnes (strain DSM 16379 / KPA171202) (Propionibacterium acnes).